We begin with the raw amino-acid sequence, 273 residues long: Dermonecrotic toxin LdSicTox-alphaIB3av (273 aa).

Residue H5 is part of the active site. Residues E25 and D27 each contribute to the Mg(2+) site. The active-site Nucleophile is the H41. Cystine bridges form between C45–C51 and C47–C190. D85 serves as a coordination point for Mg(2+).

It belongs to the arthropod phospholipase D family. Class II subfamily. The cofactor is Mg(2+). In terms of tissue distribution, expressed by the venom gland.

Its subcellular location is the secreted. The enzyme catalyses an N-(acyl)-sphingosylphosphocholine = an N-(acyl)-sphingosyl-1,3-cyclic phosphate + choline. The catalysed reaction is an N-(acyl)-sphingosylphosphoethanolamine = an N-(acyl)-sphingosyl-1,3-cyclic phosphate + ethanolamine. It carries out the reaction a 1-acyl-sn-glycero-3-phosphocholine = a 1-acyl-sn-glycero-2,3-cyclic phosphate + choline. It catalyses the reaction a 1-acyl-sn-glycero-3-phosphoethanolamine = a 1-acyl-sn-glycero-2,3-cyclic phosphate + ethanolamine. Its function is as follows. Dermonecrotic toxins cleave the phosphodiester linkage between the phosphate and headgroup of certain phospholipids (sphingolipid and lysolipid substrates), forming an alcohol (often choline) and a cyclic phosphate. This toxin acts on sphingomyelin (SM). It may also act on ceramide phosphoethanolamine (CPE), lysophosphatidylcholine (LPC) and lysophosphatidylethanolamine (LPE), but not on lysophosphatidylserine (LPS), and lysophosphatidylglycerol (LPG). It acts by transphosphatidylation, releasing exclusively cyclic phosphate products as second products. Induces dermonecrosis, hemolysis, increased vascular permeability, edema, inflammatory response, and platelet aggregation. In Loxosceles deserta (Desert recluse spider), this protein is Dermonecrotic toxin LdSicTox-alphaIB3av.